Reading from the N-terminus, the 412-residue chain is Arginine biosynthesis bifunctional protein ArgJ (412 aa).

6 residues coordinate substrate: Thr-162, Lys-188, Thr-199, Glu-285, Asn-407, and Thr-412. The Nucleophile role is filled by Thr-199.

This sequence belongs to the ArgJ family. As to quaternary structure, heterotetramer of two alpha and two beta chains.

Its subcellular location is the cytoplasm. The catalysed reaction is N(2)-acetyl-L-ornithine + L-glutamate = N-acetyl-L-glutamate + L-ornithine. It carries out the reaction L-glutamate + acetyl-CoA = N-acetyl-L-glutamate + CoA + H(+). It participates in amino-acid biosynthesis; L-arginine biosynthesis; L-ornithine and N-acetyl-L-glutamate from L-glutamate and N(2)-acetyl-L-ornithine (cyclic): step 1/1. It functions in the pathway amino-acid biosynthesis; L-arginine biosynthesis; N(2)-acetyl-L-ornithine from L-glutamate: step 1/4. Its function is as follows. Catalyzes two activities which are involved in the cyclic version of arginine biosynthesis: the synthesis of N-acetylglutamate from glutamate and acetyl-CoA as the acetyl donor, and of ornithine by transacetylation between N(2)-acetylornithine and glutamate. This is Arginine biosynthesis bifunctional protein ArgJ from Staphylococcus saprophyticus subsp. saprophyticus (strain ATCC 15305 / DSM 20229 / NCIMB 8711 / NCTC 7292 / S-41).